The primary structure comprises 291 residues: Pyridoxal kinase PdxY (291 aa).

Substrate is bound by residues S9 and 44 to 45 (TQ). ATP contacts are provided by residues D112, V144, E149, K182, and 207–210 (RPHL). D221 is a substrate binding site.

Belongs to the pyridoxine kinase family. PdxY subfamily. Homodimer. Requires Mg(2+) as cofactor.

It catalyses the reaction pyridoxal + ATP = pyridoxal 5'-phosphate + ADP + H(+). Its pathway is cofactor metabolism; pyridoxal 5'-phosphate salvage; pyridoxal 5'-phosphate from pyridoxal: step 1/1. Functionally, pyridoxal kinase involved in the salvage pathway of pyridoxal 5'-phosphate (PLP). Catalyzes the phosphorylation of pyridoxal to PLP. The chain is Pyridoxal kinase PdxY from Photobacterium profundum (strain SS9).